The primary structure comprises 299 residues: Transcription factor srbB (299 aa).

Disordered regions lie at residues 1-33 (MAYNNRPDASTAFTFDNDDRFVNQQPKGPDPLS) and 81-204 (ISGF…NAAK). Positions 161-170 (PVTSQATTSP) are enriched in low complexity. A compositionally biased stretch (polar residues) spans 188 to 199 (RSLSTDSQTATG). A basic motif region spans residues 203-216 (AKRAAHNIIEKRYR). The 62-residue stretch at 203 to 264 (AKRAAHNIIE…TNAIAYMQEL (62 aa)) folds into the bHLH domain. The tract at residues 217–264 (TNMNAKFVALEKAMSGSGVQKPTKGGSGPASLKKSEILTNAIAYMQEL) is helix-loop-helix motif. A coiled-coil region spans residues 254–281 (LTNAIAYMQELQDQNAALQKELALLKQN).

Its subcellular location is the nucleus. Key transcription factors critical for hypoxia adaptation and virulence. Plays a major role in regulation of heme biosynthesis and carbohydrate metabolism early in the response to hypoxia. This is Transcription factor srbB from Aspergillus fumigatus (strain ATCC MYA-4609 / CBS 101355 / FGSC A1100 / Af293) (Neosartorya fumigata).